The primary structure comprises 426 residues: Tol-Pal system protein TolB (426 aa).

The signal sequence occupies residues 1–24 (MKLKSRFTSIIGVITLFFSQTVTA).

It belongs to the TolB family. In terms of assembly, the Tol-Pal system is composed of five core proteins: the inner membrane proteins TolA, TolQ and TolR, the periplasmic protein TolB and the outer membrane protein Pal. They form a network linking the inner and outer membranes and the peptidoglycan layer.

Its subcellular location is the periplasm. In terms of biological role, part of the Tol-Pal system, which plays a role in outer membrane invagination during cell division and is important for maintaining outer membrane integrity. In Actinobacillus pleuropneumoniae serotype 3 (strain JL03), this protein is Tol-Pal system protein TolB.